Here is a 452-residue protein sequence, read N- to C-terminus: Phosphatidylserine synthase 2 (452 aa).

Residues 1-35 are Cytoplasmic-facing; the sequence is MAKGEWKRSGADDLPLPGRSECEVFDDGTNTFFWR. The helical transmembrane segment at 36–56 threads the bilayer; it reads AHTVTVLFILTCALVYVTLLE. Residues 57–69 are Lumenal-facing; the sequence is ETPHDTAYNTKRG. A helical membrane pass occupies residues 70 to 90; sequence IVASILVFLCFGVTQAKDGPF. The Cytoplasmic segment spans residues 91–99; it reads TRPHPAYWR. The helical transmembrane segment at 100 to 120 threads the bilayer; that stretch reads FWLCVSVVYELFLIFILFQTV. Topologically, residues 121 to 286 are lumenal; sequence HDGRQFMKYI…EWRPASNLRR (166 aa). Residues 287–307 traverse the membrane as a helical segment; that stretch reads WLAVLGIIFMFLLAELNTFYL. K308 is a topological domain (cytoplasmic). A helical membrane pass occupies residues 309 to 329; the sequence is FVMWMPPEHYLVLFRLVFFVN. Residues 330 to 349 are Lumenal-facing; the sequence is VGGVAMREIYDFMDDPKFHK. Residues 350 to 370 form a helical membrane-spanning segment; the sequence is KLGQQAWIVAAITVTEFLIVV. Topologically, residues 371–376 are cytoplasmic; it reads KYDPNT. Residues 377 to 397 traverse the membrane as a helical segment; sequence IMLPIPFFITQCWILGIALIL. Topologically, residues 398–452 are lumenal; the sequence is VWTLWRFFIRDITLRYKETRRRRQEVSSERDGSSSAPSGRSKLNGSMDSVRHRKS. The segment at 419-452 is disordered; the sequence is RRQEVSSERDGSSSAPSGRSKLNGSMDSVRHRKS. Positions 430–444 are enriched in polar residues; it reads SSSAPSGRSKLNGSM.

It belongs to the phosphatidyl serine synthase family.

The protein localises to the endoplasmic reticulum membrane. The catalysed reaction is a 1,2-diacyl-sn-glycero-3-phosphoethanolamine + L-serine = a 1,2-diacyl-sn-glycero-3-phospho-L-serine + ethanolamine. It catalyses the reaction 1-hexadecanoyl-2-(9Z-octadecenoyl)-sn-glycero-3-phosphoethanolamine + L-serine = 1-hexadecanoyl-2-(9Z-octadecenoyl)-sn-glycero-3-phospho-L-serine + ethanolamine. It carries out the reaction 1-hexadecanoyl-2-(4Z,7Z,10Z,13Z,16Z,19Z-docosahexaenoyl)-sn-glycero-3-phosphoethanolamine + L-serine = 1-hexadecanoyl-2-(4Z,7Z,10Z,13Z,16Z,19Z-docosahexaenoyl)-sn-glycero-3-phosphoserine + ethanolamine. The enzyme catalyses 1-octadecanoyl-2-(5Z,8Z,11Z,14Z)-eicosatetraenoyl-sn-glycero-3-phosphoethanolamine + L-serine = 1-octadecanoyl-2-(5Z,8Z,11Z,14Z)-eicosatetraenoyl-sn-glycero-3-phosphoserine + ethanolamine. The catalysed reaction is 1-octadecanoyl-2-(4Z,7Z,10Z,13Z,16Z,19Z-docosahexaenoyl)-sn-glycero-3-phosphoethanolamine + L-serine = 1-octadecanoyl-2-(4Z,7Z,10Z,13Z,16Z,19Z-docosahexaenoyl)-sn-glycero-3-phosphoserine + ethanolamine. It catalyses the reaction 1-(1Z-octadecenyl)-2-(4Z,7Z,10Z,13Z,16Z,19Z-docosahexaenoyl)-sn-glycero-3-phosphoethanolamine + L-serine = 1-(1Z-octadecenyl)-2-(4Z,7Z,10Z,13Z,16Z,19Z-docosahexaenoyl)-sn-glycero-3-phospho-L-serine + ethanolamine. It carries out the reaction 1-octadecanoyl-2-(9Z-octadecenoyl)-sn-glycero-3-phosphoethanolamine + L-serine = 1-octadecanoyl-2-(9Z-octadecenoyl)-sn-glycero-3-phospho-L-serine + ethanolamine. The enzyme catalyses 1-(1Z-octadecenyl)-2-(9Z-octadecenoyl)-sn-glycero-3-phosphoethanolamine + L-serine = 1-(1Z-octadecenyl)-2-(9Z-octadecenoyl)-sn-glycero-3-phospho-L-serine + ethanolamine. The catalysed reaction is 1-(1Z-octadecenyl)-2-(5Z,8Z,11Z,14Z- eicosatetraenoyl)-sn-glycero-3-phosphoethanolamine + L-serine = 1-(1Z-octadecenyl)-2-(5Z,8Z,11Z,14Z-eicosatetraenoyl)-sn-glycero-3-phospho-L-serine + ethanolamine. The protein operates within phospholipid metabolism; phosphatidylserine biosynthesis. Its function is as follows. Catalyzes a base-exchange reaction in which the polar head group of phosphatidylethanolamine (PE) or phosphatidylcholine (PC) is replaced by L-serine. Catalyzes the conversion of phosphatatidylethanolamine and does not act on phosphatidylcholine. Can utilize both phosphatidylethanolamine (PE) plasmalogen and diacyl PE as substrate and the latter is six times better utilized, indicating the importance of an ester linkage at the sn-1 position. Although it shows no sn-1 fatty acyl preference, exhibits significant preference towards docosahexaenoic acid (22:6n-3) compared with 18:1 or 20:4 at the sn-2 position. This chain is Phosphatidylserine synthase 2 (ptdss2), found in Danio rerio (Zebrafish).